The chain runs to 209 residues: Imidazole glycerol phosphate synthase subunit HisH (209 aa).

One can recognise a Glutamine amidotransferase type-1 domain in the interval 1 to 205; the sequence is MIAIIDYGMG…KGVVESWKSS (205 aa). The Nucleophile role is filled by cysteine 79. Active-site residues include histidine 180 and glutamate 182.

As to quaternary structure, heterodimer of HisH and HisF.

The protein resides in the cytoplasm. It catalyses the reaction 5-[(5-phospho-1-deoxy-D-ribulos-1-ylimino)methylamino]-1-(5-phospho-beta-D-ribosyl)imidazole-4-carboxamide + L-glutamine = D-erythro-1-(imidazol-4-yl)glycerol 3-phosphate + 5-amino-1-(5-phospho-beta-D-ribosyl)imidazole-4-carboxamide + L-glutamate + H(+). The catalysed reaction is L-glutamine + H2O = L-glutamate + NH4(+). Its pathway is amino-acid biosynthesis; L-histidine biosynthesis; L-histidine from 5-phospho-alpha-D-ribose 1-diphosphate: step 5/9. In terms of biological role, IGPS catalyzes the conversion of PRFAR and glutamine to IGP, AICAR and glutamate. The HisH subunit catalyzes the hydrolysis of glutamine to glutamate and ammonia as part of the synthesis of IGP and AICAR. The resulting ammonia molecule is channeled to the active site of HisF. This is Imidazole glycerol phosphate synthase subunit HisH from Bacillus cereus (strain ATCC 10987 / NRS 248).